Reading from the N-terminus, the 386-residue chain is Succinate--CoA ligase [ADP-forming] subunit beta (386 aa).

The region spanning 9–243 is the ATP-grasp domain; that stretch reads KQLFRKYSIP…PAEDDPAEAE (235 aa). Residues lysine 45, 52–54, glutamate 98, valine 101, and glutamate 106 contribute to the ATP site; that span reads GRG. Mg(2+)-binding residues include asparagine 198 and aspartate 212. Residues asparagine 263 and 320-322 contribute to the substrate site; that span reads GIL.

The protein belongs to the succinate/malate CoA ligase beta subunit family. As to quaternary structure, heterotetramer of two alpha and two beta subunits. Requires Mg(2+) as cofactor.

The catalysed reaction is succinate + ATP + CoA = succinyl-CoA + ADP + phosphate. It catalyses the reaction GTP + succinate + CoA = succinyl-CoA + GDP + phosphate. Its pathway is carbohydrate metabolism; tricarboxylic acid cycle; succinate from succinyl-CoA (ligase route): step 1/1. Its function is as follows. Succinyl-CoA synthetase functions in the citric acid cycle (TCA), coupling the hydrolysis of succinyl-CoA to the synthesis of either ATP or GTP and thus represents the only step of substrate-level phosphorylation in the TCA. The beta subunit provides nucleotide specificity of the enzyme and binds the substrate succinate, while the binding sites for coenzyme A and phosphate are found in the alpha subunit. The chain is Succinate--CoA ligase [ADP-forming] subunit beta from Desulfotalea psychrophila (strain LSv54 / DSM 12343).